The sequence spans 264 residues: 3-methyl-2-oxobutanoate hydroxymethyltransferase (264 aa).

Mg(2+)-binding residues include Asp45 and Asp84. Residues 45–46, Asp84, and Lys112 each bind 3-methyl-2-oxobutanoate; that span reads DS. Mg(2+) is bound at residue Glu114. The active-site Proton acceptor is the Glu181.

The protein belongs to the PanB family. As to quaternary structure, homodecamer; pentamer of dimers. Mg(2+) is required as a cofactor.

It is found in the cytoplasm. The enzyme catalyses 3-methyl-2-oxobutanoate + (6R)-5,10-methylene-5,6,7,8-tetrahydrofolate + H2O = 2-dehydropantoate + (6S)-5,6,7,8-tetrahydrofolate. Its pathway is cofactor biosynthesis; (R)-pantothenate biosynthesis; (R)-pantoate from 3-methyl-2-oxobutanoate: step 1/2. Catalyzes the reversible reaction in which hydroxymethyl group from 5,10-methylenetetrahydrofolate is transferred onto alpha-ketoisovalerate to form ketopantoate. The protein is 3-methyl-2-oxobutanoate hydroxymethyltransferase of Vibrio atlanticus (strain LGP32) (Vibrio splendidus (strain Mel32)).